The following is a 509-amino-acid chain: SH2 domain-containing adapter protein B (509 aa).

Disordered regions lie at residues M1–L103 and S144–Y178. Residues M1–W410 are mediates interaction with LAT, PTK2/FAK1, JAK1 and JAK3. A compositionally biased stretch (low complexity) spans V44 to S61. The span at C62 to D79 shows a compositional bias: polar residues. The residue at position 102 (S102) is a Phosphoserine. Residues S144 to S158 show a composition bias toward low complexity. A Glycyl lysine isopeptide (Lys-Gly) (interchain with G-Cter in SUMO2) cross-link involves residue K187. Positions A229–K385 are disordered. 2 stretches are compositionally biased toward basic and acidic residues: residues G233–I242 and F250–K262. 2 positions are modified to phosphoserine: S307 and S317. Positions S307–S317 are enriched in polar residues. Residues R319–D334 are compositionally biased toward basic and acidic residues. S388 carries the post-translational modification Phosphoserine. Positions W410 to V504 constitute an SH2 domain.

Interacts with PTPN11. Interacts with phosphorylated 'Tyr-720' of the ligand-activated receptor PDGFRA via its SH2 domain. Interacts with the ligand-activated receptors PDGFRB, FGFR1, KDR/VEGFR2, IL2RB and IL2RG. Interacts with EPS8 and V-SRC. Interacts with GRB2 and GRAP. Interacts with CD3Z. Interacts with tyrosine-phosphorylated LAT upon T-cell antigen receptor activation. Interacts with PLCG1. Interacts with ZAP70, LCP2/SLP-76, VAV1 and GRAP2. Interacts with JAK1 and JAK3. Interacts with PTK2/FAK1. Interacts with CRK/CrKII. Interacts with IRS2. In terms of processing, phosphorylated upon PDGFRA, PDGFRB, TCR, IL2 receptor, FGFR1 or VEGFR2 activation. As to expression, widely expressed.

It localises to the cytoplasm. Its subcellular location is the cell membrane. Its function is as follows. Adapter protein which regulates several signal transduction cascades by linking activated receptors to downstream signaling components. May play a role in angiogenesis by regulating FGFR1, VEGFR2 and PDGFR signaling. May also play a role in T-cell antigen receptor/TCR signaling, interleukin-2 signaling, apoptosis and neuronal cells differentiation by mediating basic-FGF and NGF-induced signaling cascades. May also regulate IRS1 and IRS2 signaling in insulin-producing cells. The chain is SH2 domain-containing adapter protein B (SHB) from Homo sapiens (Human).